Here is a 303-residue protein sequence, read N- to C-terminus: Deoxyhypusine hydroxylase (303 aa).

HEAT-like PBS-type repeat units lie at residues 56–82 (LKHELAYCLGQMKDRRALPVLKQVLQD) and 89–115 (VRHEAGEALGAIGDPEVLELLREYAQD). Residues histidine 58, histidine 91, and glutamate 92 each contribute to the Fe cation site. Residues 139–158 (DSPDTNPYLSVDPAPPAEEK) are disordered. 3 HEAT-like PBS-type repeats span residues 176–202 (HRYRAMFALRNIGGEEAVLALADGLQI), 207–233 (FRHEIGYVLGQMQHKAAVPGLSAALER), and 240–266 (VRHECAEALGSIAHEDCLKALRAHVGD). Fe cation is bound by residues histidine 209, histidine 242, and glutamate 243.

Belongs to the deoxyhypusine hydroxylase family. It depends on Fe(2+) as a cofactor.

It catalyses the reaction [eIF5A protein]-deoxyhypusine + AH2 + O2 = [eIF5A protein]-hypusine + A + H2O. Its pathway is protein modification; eIF5A hypusination. In terms of biological role, catalyzes the hydroxylation of the N(6)-(4-aminobutyl)-L-lysine intermediate produced by deoxyhypusine synthase/DHPS on a critical lysine of the eukaryotic translation initiation factor 5A/eIF-5A. This is the second step of the post-translational modification of that lysine into an unusual amino acid residue named hypusine. Hypusination is unique to mature eIF-5A factor and is essential for its function. The polypeptide is Deoxyhypusine hydroxylase (dohh) (Xenopus laevis (African clawed frog)).